The primary structure comprises 2609 residues: Mycosubtilin synthase subunit C (2609 aa).

Residues 258-1628 (PREKTIHQLF…RVCAQPEMTV (1371 aa)) form a domain 1 (D-serine-activating) region. Residues 288 to 695 (TYQELNEKAN…HIPSIQESIV (408 aa)) form an adenylation 1 region. In terms of domain architecture, Carrier 1 spans 771–845 (APRTELEKIL…ELVPYVEPVT (75 aa)). Residue Ser806 is modified to O-(pantetheine 4'-phosphoryl)serine. Residues 853–1312 (IKGPALLTPI…EISIDELDQF (460 aa)) form an epimerization 1 region. Positions 1322–1623 (IENIYPLTPM…NTIPVRVCAQ (302 aa)) are condensation 1. The tract at residues 1778 to 2359 (PKEKTIYQLF…AHAIQAAALP (582 aa)) is domain 2 (isoleucine-activating). Residues 1808–2205 (TYRQLNEQAN…LVESVKEAVV (398 aa)) are adenylation 2. Residues 2282–2357 (APRTLIEKQL…TMAHAIQAAA (76 aa)) enclose the Carrier 2 domain. Ser2317 is subject to O-(pantetheine 4'-phosphoryl)serine. Residues 2375 to 2581 (IPVFCFPPLI…ENMSTIRSIM (207 aa)) form a thioesterase region.

The protein belongs to the ATP-dependent AMP-binding enzyme family. The cofactor is pantetheine 4'-phosphate.

In terms of biological role, this protein is a multifunctional enzyme, able to activate and polymerize the amino acids Ser and Asn as part of the synthesis of mycosubtilin. The Ser residue is further epimerized to the D-isomer form. The activation sites for these amino acids consist of individual domains. This chain is Mycosubtilin synthase subunit C (mycC), found in Bacillus subtilis.